Reading from the N-terminus, the 305-residue chain is tRNA pseudouridine synthase B (305 aa).

Residue Asp-48 is the Nucleophile of the active site.

It belongs to the pseudouridine synthase TruB family. Type 1 subfamily.

The catalysed reaction is uridine(55) in tRNA = pseudouridine(55) in tRNA. In terms of biological role, responsible for synthesis of pseudouridine from uracil-55 in the psi GC loop of transfer RNAs. The polypeptide is tRNA pseudouridine synthase B (Mannheimia succiniciproducens (strain KCTC 0769BP / MBEL55E)).